We begin with the raw amino-acid sequence, 417 residues long: Serine hydroxymethyltransferase 4 (417 aa).

(6S)-5,6,7,8-tetrahydrofolate contacts are provided by residues L121 and 125–127; that span reads GHL. K230 is subject to N6-(pyridoxal phosphate)lysine. A (6S)-5,6,7,8-tetrahydrofolate-binding site is contributed by 355–357; that stretch reads SPF.

Belongs to the SHMT family. As to quaternary structure, homodimer. The cofactor is pyridoxal 5'-phosphate.

The protein resides in the cytoplasm. It catalyses the reaction (6R)-5,10-methylene-5,6,7,8-tetrahydrofolate + glycine + H2O = (6S)-5,6,7,8-tetrahydrofolate + L-serine. Its pathway is one-carbon metabolism; tetrahydrofolate interconversion. It participates in amino-acid biosynthesis; glycine biosynthesis; glycine from L-serine: step 1/1. Functionally, catalyzes the reversible interconversion of serine and glycine with tetrahydrofolate (THF) serving as the one-carbon carrier. This reaction serves as the major source of one-carbon groups required for the biosynthesis of purines, thymidylate, methionine, and other important biomolecules. Also exhibits THF-independent aldolase activity toward beta-hydroxyamino acids, producing glycine and aldehydes, via a retro-aldol mechanism. In Colwellia psychrerythraea (strain 34H / ATCC BAA-681) (Vibrio psychroerythus), this protein is Serine hydroxymethyltransferase 4.